The chain runs to 404 residues: Demethylphylloquinone reductase NdbB (404 aa).

7–43 is a binding site for FAD; it reads RICILGGGFGGLYTALRLGQLSWEGHTPPEIVLVDQR. 159–195 is an NADP(+) binding site; that stretch reads IRIAIVGGGYSGVELAAKLGDRLGERGRIRIIERGKE.

This sequence belongs to the NADH dehydrogenase family. It depends on FAD as a cofactor.

The enzyme catalyses demethylphylloquinone + NADPH + H(+) = demethylphylloquinol + NADP(+). The protein operates within cofactor biosynthesis; phylloquinone biosynthesis. With respect to regulation, inhibited by dicumarol. Bifunctional oxidoreductase probably ables to act both on prenyl naphthoquinones and on prenyl benzoquinones. Catalyzes the penultimate step in the biosynthesis of vitamin K1. The sequence is that of Demethylphylloquinone reductase NdbB from Synechocystis sp. (strain ATCC 27184 / PCC 6803 / Kazusa).